A 117-amino-acid polypeptide reads, in one-letter code: Conotoxin vil14.3 (117 aa).

Positions 1 to 22 (MGFRVLVLVVMATTSALPFTFS) are cleaved as a signal peptide. The propeptide occupies 23 to 90 (EEPGRSPFRP…FAELSVGQRR (68 aa)). Positions 53-79 (RADGQPPDMRQPEMRRPEMRRPEVRQP) are disordered. Residues 62–79 (RQPEMRRPEMRRPEVRQP) are compositionally biased toward basic and acidic residues. 2 disulfide bridges follow: Cys-96/Cys-116 and Cys-100/Cys-112.

It belongs to the conotoxin R superfamily. Expressed by the venom duct.

Its subcellular location is the secreted. In Conus villepinii (Villepin's cone), this protein is Conotoxin vil14.3.